The sequence spans 223 residues: Deoxyribose-phosphate aldolase (223 aa).

The active-site Proton donor/acceptor is D92. The active-site Schiff-base intermediate with acetaldehyde is the K154. Residue K182 is the Proton donor/acceptor of the active site.

This sequence belongs to the DeoC/FbaB aldolase family. DeoC type 1 subfamily.

It is found in the cytoplasm. It catalyses the reaction 2-deoxy-D-ribose 5-phosphate = D-glyceraldehyde 3-phosphate + acetaldehyde. It functions in the pathway carbohydrate degradation; 2-deoxy-D-ribose 1-phosphate degradation; D-glyceraldehyde 3-phosphate and acetaldehyde from 2-deoxy-alpha-D-ribose 1-phosphate: step 2/2. Its function is as follows. Catalyzes a reversible aldol reaction between acetaldehyde and D-glyceraldehyde 3-phosphate to generate 2-deoxy-D-ribose 5-phosphate. The protein is Deoxyribose-phosphate aldolase of Haemophilus influenzae (strain 86-028NP).